A 678-amino-acid chain; its full sequence is Endoplasmic reticulum membrane-associated RNA degradation protein (678 aa).

2 consecutive transmembrane segments (helical) span residues 390-410 and 587-607; these read LLAF…LSVF and VLSL…AVCG.

It is found in the endoplasmic reticulum membrane. In terms of biological role, may play a role in neuronal migration during embryonic development. The protein is Endoplasmic reticulum membrane-associated RNA degradation protein (ERMARD) of Homo sapiens (Human).